The following is a 271-amino-acid chain: Structure-specific endonuclease subunit SLX1 (271 aa).

The GIY-YIG domain occupies 9–94 (RFFGVYLLYC…PQASRRLTHV (86 aa)). The SLX1-type zinc finger occupies 182–234 (CTLCARMLQDEEGPLCCPHPGCPLRAHIICLAEEFLQEEPGQLLPLEGHCPSC).

This sequence belongs to the SLX1 family. Forms a heterodimer with SLX4. The cofactor is a divalent metal cation.

It is found in the nucleus. Functionally, catalytic subunit of the SLX1-SLX4 structure-specific endonuclease that resolves DNA secondary structures generated during DNA repair and recombination. Has endonuclease activity towards branched DNA substrates, introducing single-strand cuts in duplex DNA close to junctions with ss-DNA. Has a preference for 5'-flap structures, and promotes symmetrical cleavage of static and migrating Holliday junctions (HJs). Resolves HJs by generating two pairs of ligatable, nicked duplex products. The sequence is that of Structure-specific endonuclease subunit SLX1 (Slx1b) from Rattus norvegicus (Rat).